The following is a 310-amino-acid chain: Ribosomal RNA small subunit methyltransferase H (310 aa).

S-adenosyl-L-methionine is bound by residues 32–34 (GGH), D52, F79, D100, and Q107.

This sequence belongs to the methyltransferase superfamily. RsmH family.

The protein localises to the cytoplasm. The enzyme catalyses cytidine(1402) in 16S rRNA + S-adenosyl-L-methionine = N(4)-methylcytidine(1402) in 16S rRNA + S-adenosyl-L-homocysteine + H(+). Specifically methylates the N4 position of cytidine in position 1402 (C1402) of 16S rRNA. In Geobacillus thermodenitrificans (strain NG80-2), this protein is Ribosomal RNA small subunit methyltransferase H.